The chain runs to 524 residues: Bifunctional purine biosynthesis protein PurH (524 aa).

Positions 1–145 (MIKQALLSVS…KNHRDVTVIV (145 aa)) constitute an MGS-like domain.

It belongs to the PurH family.

It catalyses the reaction (6R)-10-formyltetrahydrofolate + 5-amino-1-(5-phospho-beta-D-ribosyl)imidazole-4-carboxamide = 5-formamido-1-(5-phospho-D-ribosyl)imidazole-4-carboxamide + (6S)-5,6,7,8-tetrahydrofolate. It carries out the reaction IMP + H2O = 5-formamido-1-(5-phospho-D-ribosyl)imidazole-4-carboxamide. The protein operates within purine metabolism; IMP biosynthesis via de novo pathway; 5-formamido-1-(5-phospho-D-ribosyl)imidazole-4-carboxamide from 5-amino-1-(5-phospho-D-ribosyl)imidazole-4-carboxamide (10-formyl THF route): step 1/1. It functions in the pathway purine metabolism; IMP biosynthesis via de novo pathway; IMP from 5-formamido-1-(5-phospho-D-ribosyl)imidazole-4-carboxamide: step 1/1. This is Bifunctional purine biosynthesis protein PurH from Cupriavidus metallidurans (strain ATCC 43123 / DSM 2839 / NBRC 102507 / CH34) (Ralstonia metallidurans).